Consider the following 44-residue polypeptide: Photosystem I reaction center subunit IX (44 aa).

Residues 7–27 (YLSVAPVLSTLSLGFFAGFLI) form a helical membrane-spanning segment.

It belongs to the PsaJ family.

It is found in the plastid membrane. May help in the organization of the PsaE and PsaF subunits. The sequence is that of Photosystem I reaction center subunit IX from Cuscuta obtusiflora (Peruvian dodder).